A 448-amino-acid polypeptide reads, in one-letter code: Exodeoxyribonuclease 7 large subunit (448 aa).

Belongs to the XseA family. As to quaternary structure, heterooligomer composed of large and small subunits.

It localises to the cytoplasm. The catalysed reaction is Exonucleolytic cleavage in either 5'- to 3'- or 3'- to 5'-direction to yield nucleoside 5'-phosphates.. Its function is as follows. Bidirectionally degrades single-stranded DNA into large acid-insoluble oligonucleotides, which are then degraded further into small acid-soluble oligonucleotides. This Geobacillus kaustophilus (strain HTA426) protein is Exodeoxyribonuclease 7 large subunit.